Here is a 380-residue protein sequence, read N- to C-terminus: Lipid-A-disaccharide synthase (380 aa).

This sequence belongs to the LpxB family.

The catalysed reaction is a lipid X + a UDP-2-N,3-O-bis[(3R)-3-hydroxyacyl]-alpha-D-glucosamine = a lipid A disaccharide + UDP + H(+). The protein operates within bacterial outer membrane biogenesis; LPS lipid A biosynthesis. In terms of biological role, condensation of UDP-2,3-diacylglucosamine and 2,3-diacylglucosamine-1-phosphate to form lipid A disaccharide, a precursor of lipid A, a phosphorylated glycolipid that anchors the lipopolysaccharide to the outer membrane of the cell. In Pseudomonas syringae pv. tomato (strain ATCC BAA-871 / DC3000), this protein is Lipid-A-disaccharide synthase.